Here is a 526-residue protein sequence, read N- to C-terminus: Glucomannan 4-beta-mannosyltransferase 1 (526 aa).

A helical membrane pass occupies residues 31–51; sequence VIIPLLKLAVIVCSVMSIMLF. D130 is an active-site residue. 2 residues coordinate substrate: D189 and D191. Residue D283 is part of the active site. Helical transmembrane passes span 362 to 382, 399 to 419, 477 to 497, and 501 to 521; these read IVAH…CVIV, ITIL…LWIL, PLEI…LLFG, and FFVY…GLVG.

This sequence belongs to the glycosyltransferase 2 family. Plant cellulose synthase-like A subfamily.

Its subcellular location is the golgi apparatus membrane. The enzyme catalyses GDP-mannose + (glucomannan)n = GDP + (glucomannan)n+1.. Functionally, possesses 4-beta-mannosyltransferase activity on mannan using GDP-mannose. The beta-1,4-mannan product is the backbone for galactomannan synthesis by galactomannan galactosyltransferase. The galactomannan is a hemicellulosic storage polysaccharide accumulated in the form of secondary wall thickenings in the seed endosperm. The protein is Glucomannan 4-beta-mannosyltransferase 1 of Cyamopsis tetragonoloba (Guar).